The sequence spans 111 residues: Small ribosomal subunit protein bS18 (111 aa).

The interval 1 to 32 (MDLENTENVENNNNNEEEVKAKGERKAHFNKE) is disordered. Over residues 17 to 32 (EEVKAKGERKAHFNKE) the composition is skewed to basic and acidic residues.

It belongs to the bacterial ribosomal protein bS18 family. In terms of assembly, part of the 30S ribosomal subunit. Forms a tight heterodimer with protein bS6.

In terms of biological role, binds as a heterodimer with protein bS6 to the central domain of the 16S rRNA, where it helps stabilize the platform of the 30S subunit. This is Small ribosomal subunit protein bS18 from Brachyspira hyodysenteriae (strain ATCC 49526 / WA1).